Consider the following 331-residue polypeptide: Type 2 lactosamine alpha-2,3-sialyltransferase (331 aa).

Topologically, residues 1-4 (MRGY) are cytoplasmic. Residues 5–25 (LVAIFLSAVFLYYVLHCILWG) form a helical; Signal-anchor for type II membrane protein membrane-spanning segment. Residues 26–331 (TNVYWVAPVE…KNLVINLTQD (306 aa)) lie on the Lumenal side of the membrane. N-linked (GlcNAc...) asparagine glycans are attached at residues asparagine 129, asparagine 181, asparagine 282, asparagine 295, asparagine 308, and asparagine 327.

Belongs to the glycosyltransferase 29 family.

Its subcellular location is the golgi apparatus membrane. It catalyses the reaction a neolactoside nLc4Cer(d18:1(4E)) + CMP-N-acetyl-beta-neuraminate = a neolactoside IV(3)-alpha-NeuAc-nLc4Cer(d18:1(4E)) + CMP + H(+). The catalysed reaction is a beta-D-galactosyl-(1-&gt;4)-N-acetyl-beta-D-glucosaminyl derivative + CMP-N-acetyl-beta-neuraminate = an N-acetyl-alpha-neuraminyl-(2-&gt;3)-beta-D-galactosyl-(1-&gt;4)-N-acetyl-beta-D-glucosaminyl derivative + CMP + H(+). The enzyme catalyses a neolactoside nLc6Cer(d18:1(4E)) + CMP-N-acetyl-beta-neuraminate = a neolactoside VI(3)-alpha-NeuNAc-nLc6Cer(d18:1(4E)) + CMP + H(+). Its function is as follows. Transfers the sialyl residue from CMP-N-acetyl-beta-neuraminate to the terminal galactose residue on sugar chains of glycoproteins and glycolipids. It's alpha-2,3-sialyltransferase activity is specific toward type II glycan chains (Galbeta1-4GlcNAc) on glycoproteins and glycolipids such as neolactosides nLc4Cer and nLc6Cer, whose sialyl-products serve as precursors for the Lewis X antigen. Critically involved in the synthesis of functional selectin ligands needed for neutrophil recruitment during inflammation and lymphocyte homing to the lymph nodes. The polypeptide is Type 2 lactosamine alpha-2,3-sialyltransferase (ST3GAL6) (Pan troglodytes (Chimpanzee)).